Here is a 120-residue protein sequence, read N- to C-terminus: NAD(P)H-quinone oxidoreductase subunit 3, chloroplastic (120 aa).

3 helical membrane passes run 9–29, 64–84, and 88–108; these read IFWA…FISG, MFAL…PWAM, and VLGV…IVGL.

The protein belongs to the complex I subunit 3 family. As to quaternary structure, NDH is composed of at least 16 different subunits, 5 of which are encoded in the nucleus.

The protein resides in the plastid. Its subcellular location is the chloroplast thylakoid membrane. The enzyme catalyses a plastoquinone + NADH + (n+1) H(+)(in) = a plastoquinol + NAD(+) + n H(+)(out). It catalyses the reaction a plastoquinone + NADPH + (n+1) H(+)(in) = a plastoquinol + NADP(+) + n H(+)(out). Its function is as follows. NDH shuttles electrons from NAD(P)H:plastoquinone, via FMN and iron-sulfur (Fe-S) centers, to quinones in the photosynthetic chain and possibly in a chloroplast respiratory chain. The immediate electron acceptor for the enzyme in this species is believed to be plastoquinone. Couples the redox reaction to proton translocation, and thus conserves the redox energy in a proton gradient. The chain is NAD(P)H-quinone oxidoreductase subunit 3, chloroplastic from Lactuca sativa (Garden lettuce).